Reading from the N-terminus, the 196-residue chain is Peroxiredoxin TSA2 (196 aa).

A Thioredoxin domain is found at 3-161 (AEVQKQAPPF…ALRLVEGFQW (159 aa)). Residue K14 forms a Glycyl lysine isopeptide (Lys-Gly) (interchain with G-Cter in ubiquitin) linkage. The active-site Cysteine sulfenic acid (-SOH) intermediate is C48. Residues K89 and K132 each participate in a glycyl lysine isopeptide (Lys-Gly) (interchain with G-Cter in ubiquitin) cross-link. A Phosphothreonine modification is found at T174.

This sequence belongs to the peroxiredoxin family. AhpC/Prx1 subfamily. As to quaternary structure, homodimer; disulfide-linked, upon oxidation.

The protein resides in the cytoplasm. It carries out the reaction a hydroperoxide + [thioredoxin]-dithiol = an alcohol + [thioredoxin]-disulfide + H2O. Its function is as follows. Thiol-specific peroxidase that catalyzes the reduction of hydrogen peroxide and organic hydroperoxides to water and alcohols, respectively. Plays a role in cell protection against oxidative stress by detoxifying peroxides and as sensor of hydrogen peroxide-mediated signaling events. Can act alternatively as peroxidase and molecular chaperone. Oxidative stress and heat shock exposure cause a reversible shift of the protein structure from low MW species to high MW complexes, triggering a peroxidase-to-chaperone functional switch. The chaperone function of the protein enhances resistance to heat shock. This Saccharomyces cerevisiae (strain ATCC 204508 / S288c) (Baker's yeast) protein is Peroxiredoxin TSA2.